Consider the following 248-residue polypeptide: Small ribosomal subunit protein uS3 (248 aa).

The KH type-2 domain maps to 39–113; the sequence is IRAYLTKQLS…TIRINVVEVT (75 aa). The interval 218–248 is disordered; that stretch reads ERPEQKVPLQQPKRRQQRRRPTFEDRSAVEA. Positions 238-248 are enriched in basic and acidic residues; it reads PTFEDRSAVEA.

This sequence belongs to the universal ribosomal protein uS3 family. Part of the 30S ribosomal subunit. Forms a tight complex with proteins S10 and S14.

Functionally, binds the lower part of the 30S subunit head. Binds mRNA in the 70S ribosome, positioning it for translation. In Synechococcus sp. (strain JA-3-3Ab) (Cyanobacteria bacterium Yellowstone A-Prime), this protein is Small ribosomal subunit protein uS3.